Reading from the N-terminus, the 249-residue chain is tRNA(Phe) (4-demethylwyosine(37)-C(7)) aminocarboxypropyltransferase (249 aa).

Residues Ser-80, Arg-87, Glu-127, and 154-155 (DN) each bind S-adenosyl-L-methionine.

It belongs to the class I-like SAM-binding methyltransferase superfamily. TRM5/TYW2 family.

The protein resides in the cytoplasm. The enzyme catalyses 4-demethylwyosine(37) in tRNA(Phe) + S-adenosyl-L-methionine = 4-demethyl-7-[(3S)-3-amino-3-carboxypropyl]wyosine(37) in tRNA(Phe) + S-methyl-5'-thioadenosine + H(+). In terms of biological role, S-adenosyl-L-methionine-dependent transferase that acts as a component of the wyosine derivatives biosynthesis pathway. Catalyzes the transfer of the alpha-amino-alpha-carboxypropyl (acp) group from S-adenosyl-L-methionine to 4-demethylwyosine (imG-14), forming 7-aminocarboxypropyl-demethylwyosine (wybutosine-86) at position 37 of tRNA(Phe). The protein is tRNA(Phe) (4-demethylwyosine(37)-C(7)) aminocarboxypropyltransferase of Methanocaldococcus jannaschii (strain ATCC 43067 / DSM 2661 / JAL-1 / JCM 10045 / NBRC 100440) (Methanococcus jannaschii).